Here is an 892-residue protein sequence, read N- to C-terminus: NACHT, LRR and PYD domains-containing protein 6 (892 aa).

Positions 1–103 (MDQPEAPCSS…AAQLQERRLQ (103 aa)) constitute a Pyrin domain. Positions 158–181 (APEEAMGPAEEPEPGRARRSDTHT) are disordered. The span at 170-181 (EPGRARRSDTHT) shows a compositional bias: basic and acidic residues. The 318-residue stretch at 196-513 (LTVVLQGPAG…EFLAALSYLL (318 aa)) folds into the NACHT domain. 202–209 (GPAGIGKT) is a binding site for ATP. Positions 352-356 (KDKKK) are disordered. Residues 462-487 (EKELEQLELRGSKVQTLFLSKKELPG) form an LRR 1 repeat. Residues 590–614 (APEVTEGAKGLEDTEEPEEEEEGEE) are disordered. Acidic residues predominate over residues 602-614 (DTEEPEEEEEGEE). LRR repeat units lie at residues 727-747 (LCHL…VCRD), 755-778 (APAL…MLSE), 811-834 (SPAL…YLCA), and 845-868 (TLSL…KRAK).

It belongs to the NLRP family. In terms of assembly, homomultimer; forms the NLRP6 inflammasome polymeric complex, a filament composed of homopolymers in response to pathogens and other damage-associated signals. The core of NLRP6 inflammasomes consists of a signal sensor component (NLRP6), an adapter (PYCARD/ASC), which recruits effector pro-inflammatory caspases (CASP1 and CASP4). Interacts (via pyrin domain) with PYCARD/ASC (via pyrin domain); interaction takes place following NLRP6 activation and formation of liquid-liquid phase separation (LLPS), initiating nucleation which greatly enhances further addition of soluble PYCARD/ASC molecules to the speck in a prion-like polymerization process. Clustered PYCARD/ASC nucleates the formation of CASP1 (or possibly CASP4) filaments through the interaction of their respective CARD domains, acting as a platform for CASP1 polymerization. CASP1 filament formation increases local enzyme concentration, resulting in trans-autocleavage and activation. Active CASP1 then processes IL1B and IL18 precursors, leading to the release of mature cytokines in the extracellular milieu and inflammatory response. Interacts with DHX15. In terms of processing, polyubiquitinated with 'Lys-63'-linked chains, promoting the interaction with PYCARD/ASC and formation of the NLRP6 inflammasome. Deubiquitination by CYLD decreases the interaction with PYCARD/ASC. As to expression, expressed in peripheral blood leukocytes, predominantly in granulocytes and, at lower levels, in CD4(+) and CD8(+) T-cells. Expressed in colonic myofibroblasts (at protein level).

The protein resides in the cytoplasm. It localises to the cytosol. Its subcellular location is the inflammasome. It is found in the cell membrane. The protein localises to the nucleus membrane. Functionally, acts as the sensor component of the NLRP6 inflammasome, which mediates inflammasome activation in response to various pathogen-associated signals, leading to maturation and secretion of IL1B and IL18. Inflammasomes are supramolecular complexes that assemble in the cytosol in response to pathogens and other damage-associated signals and play critical roles in innate immunity and inflammation. Acts as a recognition receptor (PRR): recognizes and binds specific pathogens and other damage-associated signals, such as lipoteichoic acid (LTA), a cell-wall component of Gram-positive bacteria, or double stranded RNA (dsRNA). May also recognize and bind lipopolysaccharide (LPS), a major component of the outer membrane of Gram-negative bacteria; however, LPS is probably not a major activator of the NLRP6 inflammasome. Following LTA- or dsRNA-binding, NLRP6 undergoes liquid-liquid phase separation (LLPS), enhancing multivalent interactions, an essential step for the formation of the NLRP6 inflammasome polymeric complex. The NLRP6 inflammasome acts by promoting recruitment of effector pro-inflammatory caspases (CASP1 and/or CASP4) that catalyze maturation and secretion of IL1B and IL18 in the extracellular milieu. The NLRP6 inflammasome plays a central role in the maintenance of epithelial integrity and host defense against microbial infections in the intestine. Required to restrict infection against Gram-positive bacteria by recognizing lipoteichoic acid (LTA), leading to recruitment of CASP4 and CASP1, and subsequent maturation and secretion of IL1B and IL18. Involved in intestinal antiviral innate immunity together with DHX15: recognizes and binds viral dsRNA to restrict infection by enteric viruses through the interferon pathway and GSDMD-dependent release of IL18. Required to prevent infection by the apicomplexan parasite Cryptosporidium in enterocytes by promoting GSDMD-dependent release of IL18. The NLRP6 inflammasome may also regulate the gut microbiota composition by acting as a sensor of microbiota-associated metabolites to form a PYCARD/ASC-dependent inflammasome for downstream IL18 release and secretion of antimicrobial peptides. Essential for gut mucosal self-renewal and proliferation. Regulate mucus secretion in an inflammasome- and autophagy-dependent manner to prevent invasion by enteric bacteria,. During systemic bacterial infections, the NLRP6 inflammasome negatively regulates neutrophil recruitment and neutrophil extracellular traps (NETs) formation. May promote peripheral nerve recovery following injury via an inflammasome-independent mechanism. The protein is NACHT, LRR and PYD domains-containing protein 6 of Homo sapiens (Human).